The following is a 90-amino-acid chain: Small ribosomal subunit protein uS17 (90 aa).

It belongs to the universal ribosomal protein uS17 family. In terms of assembly, part of the 30S ribosomal subunit.

One of the primary rRNA binding proteins, it binds specifically to the 5'-end of 16S ribosomal RNA. This Burkholderia ambifaria (strain ATCC BAA-244 / DSM 16087 / CCUG 44356 / LMG 19182 / AMMD) (Burkholderia cepacia (strain AMMD)) protein is Small ribosomal subunit protein uS17.